A 208-amino-acid chain; its full sequence is Imidazoleglycerol-phosphate dehydratase (208 aa).

Positions 1–22 (MTEDTETSSTGAGADDRTAAIS) are disordered.

It belongs to the imidazoleglycerol-phosphate dehydratase family.

It localises to the cytoplasm. It carries out the reaction D-erythro-1-(imidazol-4-yl)glycerol 3-phosphate = 3-(imidazol-4-yl)-2-oxopropyl phosphate + H2O. Its pathway is amino-acid biosynthesis; L-histidine biosynthesis; L-histidine from 5-phospho-alpha-D-ribose 1-diphosphate: step 6/9. The chain is Imidazoleglycerol-phosphate dehydratase from Haloquadratum walsbyi (strain DSM 16790 / HBSQ001).